A 230-amino-acid polypeptide reads, in one-letter code: Secretory carrier-associated membrane protein 4 (230 aa).

Over 1–39 (MSGKENNFPPLPKFIPLKPCFYQNFSDEIPIEHQVLVKR) the chain is Cytoplasmic. 4 consecutive transmembrane segments (helical) span residues 40 to 60 (IYRLWLFYCATLGVNLVACLA), 61 to 81 (WWIAGGSGANFGLALLWLLLF), 105 to 125 (FMAFFFIFGAQFILTIIQAVG), and 149 to 169 (VVMLLPAIMFSMSAAMMAVMI). Residues 170 to 230 (MKVHSIYRGT…SYPASGGQWP (61 aa)) are Cytoplasmic-facing. Phosphothreonine is present on threonine 194. Residues 208 to 230 (FSGNSLPEYPTVPSYPASGGQWP) are disordered.

The protein belongs to the SCAMP family.

It localises to the membrane. Functionally, probably involved in membrane protein trafficking. This Bos taurus (Bovine) protein is Secretory carrier-associated membrane protein 4 (SCAMP4).